Reading from the N-terminus, the 563-residue chain is Arginine--tRNA ligase (563 aa).

Residues 120–130 (PNIAKPFHIGH) carry the 'HIGH' region motif.

It belongs to the class-I aminoacyl-tRNA synthetase family. Monomer.

It is found in the cytoplasm. It carries out the reaction tRNA(Arg) + L-arginine + ATP = L-arginyl-tRNA(Arg) + AMP + diphosphate. This chain is Arginine--tRNA ligase, found in Clostridium botulinum (strain Loch Maree / Type A3).